The chain runs to 764 residues: Nucleolar complex-associated protein 2 (764 aa).

Positions 3 to 69 (AKDDKKRVKK…EEELKRLQEK (67 aa)) form a coiled coil. 4 disordered regions span residues 23 to 67 (ELNN…KRLQ), 89 to 113 (ATEI…EGDD), 627 to 646 (AVFG…DRME), and 651 to 726 (AFNS…EDDA). The segment covering 30 to 41 (IDAHDIVMEQKS) has biased composition (basic and acidic residues). Over residues 42 to 51 (DKKRGKKVKS) the composition is skewed to basic residues. Over residues 52-67 (KKAEAEEHEEELKRLQ) the composition is skewed to basic and acidic residues. The span at 90-113 (TEIEDDADVEPDTDLEDTEKEGDD) shows a compositional bias: acidic residues. The span at 661-672 (DSKEKEPEEEKT) shows a compositional bias: basic and acidic residues. The Nuclear localization signal 1 motif lies at 673–680 (KKKKRKRG). Over residues 673 to 682 (KKKKRKRGGK) the composition is skewed to basic residues. Acidic residues predominate over residues 693-726 (GLGEDDVVEDFVLSSDEEEEDLFDIGGDKDEDDA). Positions 738–745 (SKKTKGTY) match the Nuclear localization signal 2 motif.

Belongs to the NOC2 family. Component of nucleolar complexes. Forms homodimers. Interacts with RBL and NOC3 in both the nucleolus and nucleoplasm. Binds to SWA2.

Its subcellular location is the nucleus. The protein localises to the nucleolus. It is found in the nucleoplasm. In terms of biological role, together with SWA2, probably involved in pre-ribosome export from the nucleus to the cytoplasm. The sequence is that of Nucleolar complex-associated protein 2 from Arabidopsis thaliana (Mouse-ear cress).